Reading from the N-terminus, the 374-residue chain is Chaperone protein DnaJ (374 aa).

The 65-residue stretch at 6 to 70 (DYYDILGVSK…QKRAQYDQFG (65 aa)) folds into the J domain. The CR-type zinc-finger motif lies at 135–217 (GKKTTIKYSR…CGGTGHTSQQ (83 aa)). Zn(2+) is bound by residues Cys148, Cys151, Cys165, Cys168, Cys191, Cys194, Cys205, and Cys208. CXXCXGXG motif repeat units lie at residues 148-155 (CKTCGGSG), 165-172 (CHKCNGTG), 191-198 (CDVCNGTG), and 205-212 (CPTCGGTG). Disordered stretches follow at residues 308-328 (GTNF…GTGD) and 347-374 (EALK…KFMN).

It belongs to the DnaJ family. Homodimer. Requires Zn(2+) as cofactor.

Its subcellular location is the cytoplasm. Functionally, participates actively in the response to hyperosmotic and heat shock by preventing the aggregation of stress-denatured proteins and by disaggregating proteins, also in an autonomous, DnaK-independent fashion. Unfolded proteins bind initially to DnaJ; upon interaction with the DnaJ-bound protein, DnaK hydrolyzes its bound ATP, resulting in the formation of a stable complex. GrpE releases ADP from DnaK; ATP binding to DnaK triggers the release of the substrate protein, thus completing the reaction cycle. Several rounds of ATP-dependent interactions between DnaJ, DnaK and GrpE are required for fully efficient folding. Also involved, together with DnaK and GrpE, in the DNA replication of plasmids through activation of initiation proteins. The polypeptide is Chaperone protein DnaJ (Pediococcus pentosaceus (strain ATCC 25745 / CCUG 21536 / LMG 10740 / 183-1w)).